A 394-amino-acid chain; its full sequence is Na(+)/H(+) antiporter NhaA (394 aa).

A run of 11 helical transmembrane segments spans residues 11–31 (LEAA…IFAN), 59–79 (LLMW…GMEV), 95–115 (IFPA…YWFI), 125–145 (GWAI…ALLS), 155–175 (FLLA…ALFF), 177–197 (HEMS…LVAM), 203–220 (TGLI…ASVL), 254–274 (ALAP…NAGV), 296–316 (LIIG…LLGI), 328–348 (IFAI…IAGL), and 365–385 (LGIL…LKIT).

The protein belongs to the NhaA Na(+)/H(+) (TC 2.A.33) antiporter family.

The protein localises to the cell inner membrane. It catalyses the reaction Na(+)(in) + 2 H(+)(out) = Na(+)(out) + 2 H(+)(in). Functionally, na(+)/H(+) antiporter that extrudes sodium in exchange for external protons. The polypeptide is Na(+)/H(+) antiporter NhaA (Actinobacillus pleuropneumoniae serotype 3 (strain JL03)).